A 389-amino-acid chain; its full sequence is uncharacterized protein (389 aa).

Transmembrane regions (helical) follow at residues 31 to 51 (LFIV…VEVI), 96 to 116 (IMQI…ALLV), 123 to 143 (APLV…MFPP), and 152 to 172 (MIDA…LPSS).

This sequence to M.tuberculosis Rv2571c.

It localises to the cell membrane. This is an uncharacterized protein from Corynebacterium glutamicum (strain ATCC 13032 / DSM 20300 / JCM 1318 / BCRC 11384 / CCUG 27702 / LMG 3730 / NBRC 12168 / NCIMB 10025 / NRRL B-2784 / 534).